The sequence spans 72 residues: NAD(P)H-quinone oxidoreductase subunit O (72 aa).

This sequence belongs to the complex I NdhO subunit family. NDH-1 can be composed of about 15 different subunits; different subcomplexes with different compositions have been identified which probably have different functions.

It is found in the cellular thylakoid membrane. The enzyme catalyses a plastoquinone + NADH + (n+1) H(+)(in) = a plastoquinol + NAD(+) + n H(+)(out). It catalyses the reaction a plastoquinone + NADPH + (n+1) H(+)(in) = a plastoquinol + NADP(+) + n H(+)(out). Functionally, NDH-1 shuttles electrons from an unknown electron donor, via FMN and iron-sulfur (Fe-S) centers, to quinones in the respiratory and/or the photosynthetic chain. The immediate electron acceptor for the enzyme in this species is believed to be plastoquinone. Couples the redox reaction to proton translocation, and thus conserves the redox energy in a proton gradient. Cyanobacterial NDH-1 also plays a role in inorganic carbon-concentration. This Synechococcus sp. (strain JA-3-3Ab) (Cyanobacteria bacterium Yellowstone A-Prime) protein is NAD(P)H-quinone oxidoreductase subunit O.